Consider the following 322-residue polypeptide: Apolipoprotein E (322 aa).

An N-terminal signal peptide occupies residues methionine 1 to glycine 18. 8 repeat units span residues alanine 84 to serine 105, proline 106 to glycine 127, alanine 128 to glycine 149, glutamine 150 to leucine 171, arginine 172 to glutamate 193, arginine 194 to alanine 215, threonine 216 to arginine 238, and alanine 239 to glutamate 260. Positions alanine 84–glutamate 260 are 8 X 22 AA approximate tandem repeats. Methionine 147 carries the post-translational modification Methionine sulfoxide. Serine 151 carries the post-translational modification Phosphoserine. Positions histidine 162–arginine 172 are LDL and other lipoprotein receptors binding. Leucine 166 to arginine 169 contacts heparin. Residues alanine 214 to methionine 295 are lipid-binding and lipoprotein association. Threonine 216 carries an O-linked (GalNAc...) threonine glycan. Residue glycine 234–methionine 241 participates in heparin binding. A homooligomerization region spans residues glutamine 271–histidine 322. Residues arginine 283–methionine 295 are specificity for association with VLDL.

The protein belongs to the apolipoprotein A1/A4/E family. As to quaternary structure, homotetramer. May interact with ABCA1; functionally associated with ABCA1 in the biogenesis of HDLs. May interact with APP/A4 amyloid-beta peptide; the interaction is extremely stable in vitro but its physiological significance is unclear. May interact with MAPT. May interact with MAP2. In the cerebrospinal fluid, interacts with secreted SORL1. Interacts with PMEL; this allows the loading of PMEL luminal fragment on ILVs to induce fibril nucleation. In terms of processing, APOE exists as multiple glycosylated and sialylated glycoforms within cells and in plasma. The extent of glycosylation and sialylation are tissue and context specific. Glycated in plasma VLDL. Post-translationally, phosphorylated by FAM20C in the extracellular medium.

The protein resides in the secreted. It localises to the extracellular space. The protein localises to the extracellular matrix. It is found in the extracellular vesicle. Its subcellular location is the endosome. The protein resides in the multivesicular body. APOE is an apolipoprotein, a protein associating with lipid particles, that mainly functions in lipoprotein-mediated lipid transport between organs via the plasma and interstitial fluids. APOE is a core component of plasma lipoproteins and is involved in their production, conversion and clearance. Apolipoproteins are amphipathic molecules that interact both with lipids of the lipoprotein particle core and the aqueous environment of the plasma. As such, APOE associates with chylomicrons, chylomicron remnants, very low density lipoproteins (VLDL) and intermediate density lipoproteins (IDL) but shows a preferential binding to high-density lipoproteins (HDL). It also binds a wide range of cellular receptors including the LDL receptor/LDLR, the LDL receptor-related proteins LRP1, LRP2 and LRP8 and the very low-density lipoprotein receptor/VLDLR that mediate the cellular uptake of the APOE-containing lipoprotein particles. Finally, APOE also has a heparin-binding activity and binds heparan-sulfate proteoglycans on the surface of cells, a property that supports the capture and the receptor-mediated uptake of APOE-containing lipoproteins by cells. A main function of APOE is to mediate lipoprotein clearance through the uptake of chylomicrons, VLDLs, and HDLs by hepatocytes. APOE is also involved in the biosynthesis by the liver of VLDLs as well as their uptake by peripheral tissues ensuring the delivery of triglycerides and energy storage in muscle, heart and adipose tissues. By participating in the lipoprotein-mediated distribution of lipids among tissues, APOE plays a critical role in plasma and tissues lipid homeostasis. APOE is also involved in two steps of reverse cholesterol transport, the HDLs-mediated transport of cholesterol from peripheral tissues to the liver, and thereby plays an important role in cholesterol homeostasis. First, it is functionally associated with ABCA1 in the biogenesis of HDLs in tissues. Second, it is enriched in circulating HDLs and mediates their uptake by hepatocytes. APOE also plays an important role in lipid transport in the central nervous system, regulating neuron survival and sprouting. This chain is Apolipoprotein E (APOE), found in Ateles geoffroyi (Black-handed spider monkey).